A 60-amino-acid polypeptide reads, in one-letter code: Large ribosomal subunit protein uL30 (60 aa).

It belongs to the universal ribosomal protein uL30 family. As to quaternary structure, part of the 50S ribosomal subunit.

The polypeptide is Large ribosomal subunit protein uL30 (Flavobacterium psychrophilum (strain ATCC 49511 / DSM 21280 / CIP 103535 / JIP02/86)).